The chain runs to 145 residues: Ribosomal RNA large subunit methyltransferase H (145 aa).

Residues Leu-64, Gly-93, and 112 to 117 (LSPLTF) each bind S-adenosyl-L-methionine.

This sequence belongs to the RNA methyltransferase RlmH family. In terms of assembly, homodimer.

It localises to the cytoplasm. It catalyses the reaction pseudouridine(1915) in 23S rRNA + S-adenosyl-L-methionine = N(3)-methylpseudouridine(1915) in 23S rRNA + S-adenosyl-L-homocysteine + H(+). Functionally, specifically methylates the pseudouridine at position 1915 (m3Psi1915) in 23S rRNA. In Prochlorococcus marinus (strain NATL1A), this protein is Ribosomal RNA large subunit methyltransferase H.